The sequence spans 1133 residues: Lon protease homolog, mitochondrial (1133 aa).

A mitochondrion-targeting transit peptide spans 1–37; it reads MLRTRTTKTLSTVARTTRAIQYYRSIAKTAAVSQRRF. A propeptide spans 38–98 (removed in mature form; by autocatalysis); the sequence is ASTLTVRDVE…ATNSGKSILA (61 aa). Composition is skewed to basic and acidic residues over residues 98 to 117 and 125 to 143; these read AKDD…VPDE and EPTR…EASK. Disordered stretches follow at residues 98–176 and 282–358; these read AKDD…KDVP and ELFP…LDDI. Low complexity predominate over residues 145–166; that stretch reads SRSSASGGGQSSSSRSDSGDGS. A Lon N-terminal domain is found at 182 to 480; it reads MLALPIARRP…KSLLVLKKEL (299 aa). Basic and acidic residues-rich tracts occupy residues 282 to 301 and 325 to 340; these read ELFP…KDTD and KLED…SELQ. Acidic residues predominate over residues 348-358; it reads TEEESEELDDI. 632–639 serves as a coordination point for ATP; sequence GPPGVGKT. Residues 839 to 892 form a dispensable for catalytic activity region; the sequence is KKLSIEDSPTSSADSKPKESVSSEEKAENNAKSSSEKTKDNNSEKTSDDIEALK. The segment at 844-889 is disordered; the sequence is EDSPTSSADSKPKESVSSEEKAENNAKSSSEKTKDNNSEKTSDDIE. The span at 853 to 889 shows a compositional bias: basic and acidic residues; the sequence is SKPKESVSSEEKAENNAKSSSEKTKDNNSEKTSDDIE. Positions 923 to 1109 constitute a Lon proteolytic domain; that stretch reads TTPPGVVMGL…NDIFQKLFKD (187 aa). Residues Ser-1015 and Lys-1058 contribute to the active site.

It belongs to the peptidase S16 family. As to quaternary structure, homohexamer. Organized in a ring with a central cavity. The ATP-binding and proteolytic domains (AP-domain) form a hexameric chamber. Oligomerization is independent of its proteolytic activity and the autocatalytic maturation of its subunits.

It localises to the mitochondrion matrix. It catalyses the reaction Hydrolysis of proteins in presence of ATP.. In terms of biological role, ATP-dependent serine protease that mediates the selective degradation of misfolded, unassembled or oxidatively damaged polypeptides as well as certain short-lived regulatory proteins in the mitochondrial matrix. May also have a chaperone function in the assembly of inner membrane protein complexes. Participates in the regulation of mitochondrial gene expression and in the maintenance of the integrity of the mitochondrial genome. Binds to mitochondrial DNA in a site-specific manner. Endogenous substrates include ABF2, ACO2, ILV1, ILV2, LSC1, LYS4, MGM101 and several oxidized proteins. The 2 nucleic acid-binding proteins ABF2 and MGM101 are protected from degradation by PIM1 when they are bound to DNA. The sequence is that of Lon protease homolog, mitochondrial from Saccharomyces cerevisiae (strain ATCC 204508 / S288c) (Baker's yeast).